The chain runs to 439 residues: Elongation factor 1-alpha 2 (439 aa).

Positions 6-229 constitute a tr-type G domain; that stretch reads KDHLNLVVIG…DEFKVPKRPI (224 aa). The tract at residues 15-22 is G1; the sequence is GHVDSGKS. 15-22 contacts GTP; sequence GHVDSGKS. A G2 region spans residues 71-75; that stretch reads GITIN. A G3 region spans residues 92-95; sequence DAPG. Residues 92–96 and 154–157 each bind GTP; these read DAPGH and NKMD. The tract at residues 154–157 is G4; that stretch reads NKMD. A G5 region spans residues 193 to 195; the sequence is SGF.

The protein belongs to the TRAFAC class translation factor GTPase superfamily. Classic translation factor GTPase family. EF-Tu/EF-1A subfamily.

The protein resides in the cytoplasm. Its function is as follows. This protein promotes the GTP-dependent binding of aminoacyl-tRNA to the A-site of ribosomes during protein biosynthesis. This is Elongation factor 1-alpha 2 (EFA2) from Euplotes crassus.